The sequence spans 139 residues: Actin-depolymerizing factor 1 (139 aa).

Positions 5 to 139 (ASGMAVHDDC…DLDVFRSRAN (135 aa)) constitute an ADF-H domain. Serine 6 carries the post-translational modification Phosphoserine; by CPK3.

This sequence belongs to the actin-binding proteins ADF family. In terms of assembly, interacts with the 14-3-3-like protein GRF6/AFT1. In terms of processing, phosphorylation at Ser-6 by CPK3/CDPK6 inhibits actin-depolimerizing activity. In terms of tissue distribution, expressed in vascular tissues of all organs.

Its subcellular location is the cytoplasm. The protein resides in the cytoskeleton. Functionally, actin-depolymerizing protein. Stimulates F-actin depolymerization. Involved in plant development, cell organ expansion and flowering by controlling breakdown of thick actin cables. Severs actin filaments or bundles and promotes actin cytoskeleton disassembly. Binds monomeric actin (G-actin) with a marked preference for the ADP-loaded form and inhibits the rate of nucleotide exchange on G-actin. This Arabidopsis thaliana (Mouse-ear cress) protein is Actin-depolymerizing factor 1 (ADF1).